The following is a 390-amino-acid chain: tRNA-specific 2-thiouridylase MnmA (390 aa).

ATP is bound by residues 20–27 (AMSGGVDS) and Leu46. Catalysis depends on Cys114, which acts as the Nucleophile. Cys114 and Cys211 are oxidised to a cystine. Gly138 contacts ATP. The tract at residues 161 to 163 (RDQ) is interaction with tRNA. Catalysis depends on Cys211, which acts as the Cysteine persulfide intermediate.

The protein belongs to the MnmA/TRMU family.

Its subcellular location is the cytoplasm. It carries out the reaction S-sulfanyl-L-cysteinyl-[protein] + uridine(34) in tRNA + AH2 + ATP = 2-thiouridine(34) in tRNA + L-cysteinyl-[protein] + A + AMP + diphosphate + H(+). Catalyzes the 2-thiolation of uridine at the wobble position (U34) of tRNA, leading to the formation of s(2)U34. The polypeptide is tRNA-specific 2-thiouridylase MnmA (Azorhizobium caulinodans (strain ATCC 43989 / DSM 5975 / JCM 20966 / LMG 6465 / NBRC 14845 / NCIMB 13405 / ORS 571)).